A 327-amino-acid chain; its full sequence is Pyruvate dehydrogenase E1 component subunit beta (327 aa).

E63 is a binding site for thiamine diphosphate.

In terms of assembly, heterodimer of an alpha and a beta chain. Requires thiamine diphosphate as cofactor.

The enzyme catalyses N(6)-[(R)-lipoyl]-L-lysyl-[protein] + pyruvate + H(+) = N(6)-[(R)-S(8)-acetyldihydrolipoyl]-L-lysyl-[protein] + CO2. Its function is as follows. The pyruvate dehydrogenase complex catalyzes the overall conversion of pyruvate to acetyl-CoA and CO(2). It contains multiple copies of three enzymatic components: pyruvate dehydrogenase (E1), dihydrolipoamide acetyltransferase (E2) and lipoamide dehydrogenase (E3). The polypeptide is Pyruvate dehydrogenase E1 component subunit beta (pdhB) (Mycoplasma pneumoniae (strain ATCC 29342 / M129 / Subtype 1) (Mycoplasmoides pneumoniae)).